Consider the following 725-residue polypeptide: IML2-like protein SCY_3392 (725 aa).

Position 196 is a phosphothreonine (T196). S246, S377, and S380 each carry phosphoserine.

It belongs to the IML2 family.

Its subcellular location is the cytoplasm. The protein resides in the nucleus. In terms of biological role, may be involved in mitochondrial DNA stability. This Saccharomyces cerevisiae (strain YJM789) (Baker's yeast) protein is IML2-like protein SCY_3392.